Consider the following 118-residue polypeptide: Large ribosomal subunit protein bL20 (118 aa).

Belongs to the bacterial ribosomal protein bL20 family.

In terms of biological role, binds directly to 23S ribosomal RNA and is necessary for the in vitro assembly process of the 50S ribosomal subunit. It is not involved in the protein synthesizing functions of that subunit. This is Large ribosomal subunit protein bL20 from Staphylococcus epidermidis (strain ATCC 35984 / DSM 28319 / BCRC 17069 / CCUG 31568 / BM 3577 / RP62A).